Consider the following 1442-residue polypeptide: Trafficking protein particle complex subunit 10 (1442 aa).

Positions 1–23 are enriched in polar residues; the sequence is MSNVSPNSMNLNGSTSSTASVND. Disordered stretches follow at residues 1–86, 251–277, 535–564, 1208–1238, 1316–1335, and 1422–1442; these read MSNV…SSSS, TSSG…TSTK, GSSS…NSGI, LSSS…NHSK, QQQQ…QKQQ, and LQDN…TNKT. Positions 39 to 86 are enriched in low complexity; the sequence is SSSSASSISNSNSSSSNNLKPSTQPLSSSSTLNTPTQFSLQHSSSSSS. A compositionally biased stretch (low complexity) spans 535–553; the sequence is GSSSSNTPSSTSATTAANG. Polar residues predominate over residues 554 to 564; it reads KNTPMPSNSGI. The segment covering 1208–1236 has biased composition (low complexity); it reads LSSSTSPSSATDSSNSNGNNNNNNNNNNH. Low complexity predominate over residues 1425–1442; it reads NNNNNNNSINSQTSTNKT.

The protein belongs to the TMEM1 family. As to quaternary structure, part of the multisubunit TRAPP (transport protein particle) complex.

It is found in the golgi apparatus. The protein resides in the cis-Golgi network. In terms of biological role, may play a role in vesicular transport from endoplasmic reticulum to Golgi. The chain is Trafficking protein particle complex subunit 10 (trapcc10-1) from Dictyostelium discoideum (Social amoeba).